Reading from the N-terminus, the 198-residue chain is Thymidine kinase (198 aa).

ATP-binding positions include 9 to 16 (STMNAGKS) and 87 to 90 (DEAQ). Catalysis depends on glutamate 88, which acts as the Proton acceptor. Zn(2+) contacts are provided by cysteine 145, cysteine 147, cysteine 182, and histidine 185.

The protein belongs to the thymidine kinase family. Homotetramer.

Its subcellular location is the cytoplasm. It carries out the reaction thymidine + ATP = dTMP + ADP + H(+). This Ruegeria pomeroyi (strain ATCC 700808 / DSM 15171 / DSS-3) (Silicibacter pomeroyi) protein is Thymidine kinase.